The primary structure comprises 337 residues: Lipoyl synthase (337 aa).

[4Fe-4S] cluster-binding residues include C81, C86, C92, C107, C111, C114, and S323. The 220-residue stretch at 93 to 312 folds into the Radical SAM core domain; sequence FSHGTATFMI…EDYGNALGFS (220 aa).

The protein belongs to the radical SAM superfamily. Lipoyl synthase family. Requires [4Fe-4S] cluster as cofactor.

Its subcellular location is the cytoplasm. The enzyme catalyses [[Fe-S] cluster scaffold protein carrying a second [4Fe-4S](2+) cluster] + N(6)-octanoyl-L-lysyl-[protein] + 2 oxidized [2Fe-2S]-[ferredoxin] + 2 S-adenosyl-L-methionine + 4 H(+) = [[Fe-S] cluster scaffold protein] + N(6)-[(R)-dihydrolipoyl]-L-lysyl-[protein] + 4 Fe(3+) + 2 hydrogen sulfide + 2 5'-deoxyadenosine + 2 L-methionine + 2 reduced [2Fe-2S]-[ferredoxin]. Its pathway is protein modification; protein lipoylation via endogenous pathway; protein N(6)-(lipoyl)lysine from octanoyl-[acyl-carrier-protein]: step 2/2. Its function is as follows. Catalyzes the radical-mediated insertion of two sulfur atoms into the C-6 and C-8 positions of the octanoyl moiety bound to the lipoyl domains of lipoate-dependent enzymes, thereby converting the octanoylated domains into lipoylated derivatives. The protein is Lipoyl synthase of Xanthomonas euvesicatoria pv. vesicatoria (strain 85-10) (Xanthomonas campestris pv. vesicatoria).